A 387-amino-acid chain; its full sequence is 1-deoxy-D-xylulose 5-phosphate reductoisomerase (387 aa).

The NADPH site is built by Thr-10, Gly-11, Ser-12, Ile-13, Gly-36, Lys-37, Asn-38, and Asn-123. Lys-124 contributes to the 1-deoxy-D-xylulose 5-phosphate binding site. An NADPH-binding site is contributed by Glu-125. Position 149 (Asp-149) interacts with Mn(2+). Ser-150, Glu-151, Ser-175, and His-198 together coordinate 1-deoxy-D-xylulose 5-phosphate. Glu-151 provides a ligand contact to Mn(2+). Gly-204 contacts NADPH. 1-deoxy-D-xylulose 5-phosphate-binding residues include Ser-211, Asn-216, Lys-217, and Glu-220. Glu-220 contacts Mn(2+).

It belongs to the DXR family. It depends on Mg(2+) as a cofactor. Mn(2+) serves as cofactor.

The catalysed reaction is 2-C-methyl-D-erythritol 4-phosphate + NADP(+) = 1-deoxy-D-xylulose 5-phosphate + NADPH + H(+). Its pathway is isoprenoid biosynthesis; isopentenyl diphosphate biosynthesis via DXP pathway; isopentenyl diphosphate from 1-deoxy-D-xylulose 5-phosphate: step 1/6. Its function is as follows. Catalyzes the NADPH-dependent rearrangement and reduction of 1-deoxy-D-xylulose-5-phosphate (DXP) to 2-C-methyl-D-erythritol 4-phosphate (MEP). This Pelotomaculum thermopropionicum (strain DSM 13744 / JCM 10971 / SI) protein is 1-deoxy-D-xylulose 5-phosphate reductoisomerase.